A 71-amino-acid chain; its full sequence is Protein Tlp homolog (71 aa).

The interval 30–56 (ETLQNNSLSRDQRQAIMEKNKRREESI) is disordered. Residues 39–56 (RDQRQAIMEKNKRREESI) show a composition bias toward basic and acidic residues.

The protein belongs to the Tlp family.

This chain is Protein Tlp homolog, found in Desulforamulus reducens (strain ATCC BAA-1160 / DSM 100696 / MI-1) (Desulfotomaculum reducens).